The following is a 176-amino-acid chain: NAD(P)H-quinone oxidoreductase subunit 6, chloroplastic (176 aa).

5 helical membrane-spanning segments follow: residues 10-30 (FLLVFLGLGLILGGLGVVLLP), 32-52 (PIYSAFSLGLVFVCISLFYIL), 61-81 (AQLLIYVGAINVLIIFAVMFI), 92-112 (LWTVGDGITSVVCTSLFVSLI), and 152-172 (FFLPFEFISIILLVALIGAIA).

Belongs to the complex I subunit 6 family. NDH is composed of at least 16 different subunits, 5 of which are encoded in the nucleus.

The protein resides in the plastid. It is found in the chloroplast thylakoid membrane. It carries out the reaction a plastoquinone + NADH + (n+1) H(+)(in) = a plastoquinol + NAD(+) + n H(+)(out). The enzyme catalyses a plastoquinone + NADPH + (n+1) H(+)(in) = a plastoquinol + NADP(+) + n H(+)(out). NDH shuttles electrons from NAD(P)H:plastoquinone, via FMN and iron-sulfur (Fe-S) centers, to quinones in the photosynthetic chain and possibly in a chloroplast respiratory chain. The immediate electron acceptor for the enzyme in this species is believed to be plastoquinone. Couples the redox reaction to proton translocation, and thus conserves the redox energy in a proton gradient. The protein is NAD(P)H-quinone oxidoreductase subunit 6, chloroplastic (ndhG) of Lactuca sativa (Garden lettuce).